A 362-amino-acid polypeptide reads, in one-letter code: UDP-N-acetylglucosamine--N-acetylmuramyl-(pentapeptide) pyrophosphoryl-undecaprenol N-acetylglucosamine transferase (362 aa).

Residues Thr-15–Gly-17, Asn-127, Arg-165, Ser-191, Ile-247, Ala-266–Glu-271, and Gln-292 each bind UDP-N-acetyl-alpha-D-glucosamine.

This sequence belongs to the glycosyltransferase 28 family. MurG subfamily.

Its subcellular location is the cell inner membrane. It catalyses the reaction di-trans,octa-cis-undecaprenyl diphospho-N-acetyl-alpha-D-muramoyl-L-alanyl-D-glutamyl-meso-2,6-diaminopimeloyl-D-alanyl-D-alanine + UDP-N-acetyl-alpha-D-glucosamine = di-trans,octa-cis-undecaprenyl diphospho-[N-acetyl-alpha-D-glucosaminyl-(1-&gt;4)]-N-acetyl-alpha-D-muramoyl-L-alanyl-D-glutamyl-meso-2,6-diaminopimeloyl-D-alanyl-D-alanine + UDP + H(+). It functions in the pathway cell wall biogenesis; peptidoglycan biosynthesis. In terms of biological role, cell wall formation. Catalyzes the transfer of a GlcNAc subunit on undecaprenyl-pyrophosphoryl-MurNAc-pentapeptide (lipid intermediate I) to form undecaprenyl-pyrophosphoryl-MurNAc-(pentapeptide)GlcNAc (lipid intermediate II). The protein is UDP-N-acetylglucosamine--N-acetylmuramyl-(pentapeptide) pyrophosphoryl-undecaprenol N-acetylglucosamine transferase of Shewanella sp. (strain MR-4).